A 1227-amino-acid chain; its full sequence is Pesticidal crystal protein Cry1Be (1227 aa).

It belongs to the delta endotoxin family.

Functionally, promotes colloidosmotic lysis by binding to the midgut epithelial cells of many lepidopteran larvae. This Bacillus thuringiensis protein is Pesticidal crystal protein Cry1Be (cry1Be).